Reading from the N-terminus, the 1250-residue chain is Myosin-1 (1250 aa).

A disordered region spans residues 1–43 (MGHSRRPAGGEKKSRGFGRSKAAADVGDGRQTGGKPQVKKATF). In terms of domain architecture, Myosin motor spans 51-730 (IGVSDLTLLS…TLFALEAMRD (680 aa)). An ATP-binding site is contributed by 144 to 151 (GESGAGKT). Position 372 is a phosphoserine (Ser372). The interval 419–501 (SIGILDIYGF…PGVFAALNDA (83 aa)) is actin-binding. IQ domains follow at residues 734–754 (HNMA…RTEC) and 755–780 (AIRI…QGHQ). The 191-residue stretch at 788–978 (RRRMSLLGSR…TIHTGPGEPA (191 aa)) folds into the TH1 domain. 2 disordered regions span residues 962-1079 (DDSY…PKKP) and 1126-1250 (WTPE…DDDW). Pro residues predominate over residues 1021 to 1035 (AAQPLPRATPQPAAP). Positions 1036 to 1051 (QPAARAVPQPVAAVAA) are enriched in low complexity. 2 stretches are compositionally biased toward pro residues: residues 1064 to 1077 (APPP…PAPK) and 1139 to 1151 (TPKP…PPAA). One can recognise an SH3 domain in the interval 1076–1137 (PKKPTAKVLY…PEAYLEEQVA (62 aa)). The segment covering 1152–1170 (PRSTPAPATNGAAAAAKAK) has biased composition (low complexity). Over residues 1201-1222 (VSMNSHDSSGGSGRGTPNSMSN) the composition is skewed to polar residues. Residues 1223-1232 (ASLAGGLAEA) show a composition bias toward low complexity.

It belongs to the TRAFAC class myosin-kinesin ATPase superfamily. Myosin family. In terms of processing, phosphorylation of the TEDS site (Ser-372) is required for the polarization of the actin cytoskeleton. Phosphorylation probably activates the myosin-I ATPase activity.

Its subcellular location is the cytoplasm. The protein resides in the cytoskeleton. It is found in the actin patch. Functionally, type-I myosin implicated in the organization of the actin cytoskeleton. Required for proper actin cytoskeleton polarization. At the cell cortex, assembles in patch-like structures together with proteins from the actin-polymerizing machinery and promotes actin assembly. Functions as actin nucleation-promoting factor (NPF) for the Arp2/3 complex. Plays an important role in polarized growth, spore germination, hyphal morphogenesis, and septal wall formation. This chain is Myosin-1 (myoA), found in Neosartorya fischeri (strain ATCC 1020 / DSM 3700 / CBS 544.65 / FGSC A1164 / JCM 1740 / NRRL 181 / WB 181) (Aspergillus fischerianus).